Here is a 498-residue protein sequence, read N- to C-terminus: Swainsonine transporter swnT (498 aa).

Over residues 1 to 10 the composition is skewed to basic and acidic residues; the sequence is MSLRNDEQTE. A disordered region spans residues 1-21; sequence MSLRNDEQTEKGAVVGKVDSQ. Helical transmembrane passes span 42 to 64, 79 to 99, 126 to 146, 167 to 187, and 193 to 213; these read LSAI…VLGT, LAMA…ISAI, AMIS…AVPV, FVVF…EYFL, and ALLL…FATA. N-linked (GlcNAc...) asparagine glycosylation is found at N227 and N242. Helical transmembrane passes span 272-292, 316-336, 370-390, 398-418, 436-456, and 469-489; these read LIWT…AVLV, AAAI…VWSI, PIWS…LYLA, LIAT…ILVL, GFMA…FYCF, and YVSA…FLYA.

It belongs to the amino acid-polyamine-organocation (APC) superfamily. Amino acid/choline transporter (ACT) (TC 2.A.3.4) family.

It is found in the membrane. Transmembrane transporter; part of the gene cluster that mediates the biosynthesis of swainsonine, a cytotoxic fungal alkaloid and a potential cancer therapy drug. Does not mediate the secretion of SW and the exact role of swnT in SW biosynthesis remains to be determined. This is Swainsonine transporter swnT from Arthroderma benhamiae (strain ATCC MYA-4681 / CBS 112371) (Trichophyton mentagrophytes).